The primary structure comprises 246 residues: MLKVLVVDDEMLARDELKYLLERTKEVEIIGEADCVEDALEELMKNKPDIVFLDIQLSDDNGFEIANILKKMKNPPAIVFATAYDQYALQAFEVDALDYILKPFDEERIVQTLKKYKKQKQSQIEMKQEIKGADVTAEMHKLALPIEESIVLVNIEDIVYVGLVDGKVTVKTVRETYVTHDTLVILEKKLPQASFMRVHRSFIANINHITEIQPWFNSTYNLIMKEGSKVPVSRTYAKELKKLLRI.

In terms of domain architecture, Response regulatory spans Lys3–Lys117. Asp54 bears the 4-aspartylphosphate mark. One can recognise an HTH LytTR-type domain in the interval Leu142–Ile246.

Post-translationally, phosphorylated by LytS.

The protein localises to the cytoplasm. Member of the two-component regulatory system LytS/LytT that probably regulates genes involved in cell wall metabolism. The polypeptide is Sensory transduction protein LytT (lytT) (Bacillus anthracis).